The primary structure comprises 467 residues: Microtubule-associated tyrosine carboxypeptidase 1 (467 aa).

Polar residues predominate over residues Met1 to Tyr10. Disordered regions lie at residues Met1 to Pro40 and Met77 to Pro111. His276 is a binding site for Zn(2+). The active-site Nucleophile is Glu277. Zn(2+) contacts are provided by His281 and Glu312.

This sequence belongs to the peptidase MATCAP family. Requires Zn(2+) as cofactor.

It localises to the cytoplasm. The protein localises to the cytoskeleton. The catalysed reaction is C-terminal L-alpha-aminoacyl-L-glutamyl-L-glutamyl-L-tyrosyl-[tubulin] + H2O = C-terminal L-alpha-aminoacyl-L-glutamyl-L-glutamyl-[tubulin] + L-tyrosine. It catalyses the reaction C-terminal L-alpha-aminoacyl-L-glutamyl-L-glutamyl-L-phenylalanyl-[tubulin] + H2O = C-terminal L-alpha-aminoacyl-L-glutamyl-L-glutamyl-[tubulin] + L-phenylalanine. Functionally, tyrosine carboxypeptidase that removes the C-terminal tyrosine residue of alpha-tubulin, thereby regulating microtubule dynamics and function. Also able to remove the C-terminal phenylalanine residue of alpha-tubulin TUBA8. Recognizes adjacent tubulin dimers along the same protofilament. In Mus musculus (Mouse), this protein is Microtubule-associated tyrosine carboxypeptidase 1.